The primary structure comprises 1034 residues: Isoleucine--tRNA ligase (1034 aa).

The 'HIGH' region signature appears at 46–56; it reads PYCSGAIHLGT. The 'KMSKS' region motif lies at 598 to 602; that stretch reads KMSKS. Lysine 601 serves as a coordination point for ATP.

It belongs to the class-I aminoacyl-tRNA synthetase family. IleS type 2 subfamily. In terms of assembly, monomer. It depends on Zn(2+) as a cofactor.

Its subcellular location is the cytoplasm. It catalyses the reaction tRNA(Ile) + L-isoleucine + ATP = L-isoleucyl-tRNA(Ile) + AMP + diphosphate. In terms of biological role, catalyzes the attachment of isoleucine to tRNA(Ile). As IleRS can inadvertently accommodate and process structurally similar amino acids such as valine, to avoid such errors it has two additional distinct tRNA(Ile)-dependent editing activities. One activity is designated as 'pretransfer' editing and involves the hydrolysis of activated Val-AMP. The other activity is designated 'posttransfer' editing and involves deacylation of mischarged Val-tRNA(Ile). In Methanococcus maripaludis (strain DSM 14266 / JCM 13030 / NBRC 101832 / S2 / LL), this protein is Isoleucine--tRNA ligase.